Consider the following 125-residue polypeptide: MTERIPPELQTQLVKLQQLQDQLNRLLTEKNVIDSELREVNKILQELSQLPAGTTVYKIVGNLLVKTDKETVQKELDDRKEILELRSRTYQKQENLLRTQLEDLQKKVNELLAKYYPQSGGAIKA.

Belongs to the prefoldin subunit beta family. As to quaternary structure, heterohexamer of two alpha and four beta subunits.

It is found in the cytoplasm. Molecular chaperone capable of stabilizing a range of proteins. Seems to fulfill an ATP-independent, HSP70-like function in archaeal de novo protein folding. The protein is Prefoldin subunit beta (pfdB) of Sulfurisphaera tokodaii (strain DSM 16993 / JCM 10545 / NBRC 100140 / 7) (Sulfolobus tokodaii).